We begin with the raw amino-acid sequence, 600 residues long: Proton channel OTOP1 (600 aa).

The interval 1 to 50 (MPGGPGAPSSPAASSGSSRAAPSGIAACPLSPPPLARGSPQASGPRRGAS) is disordered. Residues 1 to 56 (MPGGPGAPSSPAASSGSSRAAPSGIAACPLSPPPLARGSPQASGPRRGASVPQKLA) lie on the Cytoplasmic side of the membrane. The segment covering 7–27 (APSSPAASSGSSRAAPSGIAA) has biased composition (low complexity). The helical transmembrane segment at 57–78 (ETLSSQYGLNVFVAGLLFLLAW) threads the bilayer. Residues 79 to 86 (AVHATGVG) lie on the Extracellular side of the membrane. Residues 87–110 (KSDLLCVLTALMLLQLLWMLWYVG) traverse the membrane as a helical segment. The Cytoplasmic segment spans residues 111-128 (RSYMQRRLIRPKDTHAGA). The chain crosses the membrane as a helical span at residues 129-151 (RWLRGSITLFAFITVVLGCLKVA). Over 152 to 161 (YFIGFSECLS) the chain is Extracellular. Residues 162–186 (ATEGVFPVTHAVHTLLQVYFLWGHA) form a helical membrane-spanning segment. Over 187–194 (KDIIMSFK) the chain is Cytoplasmic. The chain crosses the membrane as a helical span at residues 195–217 (TLERFGVIHSVFTNLLLWANSVL). Residues 218 to 262 (NESKHQLNEHKERLITLGFGNITIVLDDHTPQCNCTPPALCSALS) lie on the Extracellular side of the membrane. The chain crosses the membrane as a helical span at residues 263-288 (HGIYYLYPFNIEYQILASTMLYVLWK). The Cytoplasmic segment spans residues 289–309 (NIGRRVDSSQHQKMQCRFDGV). Residues 310–332 (LVGSVLGLTVLAATIAVVVVYMI) traverse the membrane as a helical segment. The Extracellular portion of the chain corresponds to 333-342 (HIGRSKSKSE). Residues 343–368 (SALIMFYLYAITVLLLMGAAGLVGSW) form a helical membrane-spanning segment. Topologically, residues 369–386 (IYRVDEKSLDESKNPARK) are cytoplasmic. The helical transmembrane segment at 387-411 (LDVDLLVATGSGSWLLSWGSILAIA) threads the bilayer. The Extracellular portion of the chain corresponds to 412 to 421 (CAETRPPYTW). Residues 422–442 (YNLPYSVLVIVEKYVQNIFII) form a helical membrane-spanning segment. The Cytoplasmic segment spans residues 443-532 (ESVHLEPEGV…QGGMKRRLLR (90 aa)). Residues 533 to 551 (NITAFLFLCNISLWIPPAF) form a helical membrane-spanning segment. Topologically, residues 552 to 569 (GCRPEYDNGLEEIVFGFE) are extracellular. The helical transmembrane segment at 570 to 593 (PWIIVVNLAMPFSIFYRMHAAAAL) threads the bilayer. Residues 594–600 (FEVYCKI) are Cytoplasmic-facing.

The protein belongs to the otopetrin family. In terms of assembly, homodimer. Interacts with STAT1, independently of STAT1 phosphorylation status. In terms of tissue distribution, expressed in thymus, heart, kidney, skin, vestibular system of the inner ear, sour taste cells, heart, uterus, dorsal root ganglion, adrenal gland, lactating mammary gland and stimulated mast cells. In the inner ear, expressed in the supporting cells in extrastriolar regions of the saccule and in the utricle, but not in the cochlea. Expressed in brown adipose tissue. Expressed in epididymal white adipose tissue (eWAT), as well as in inguinal fat, in obese animals, but hardly detectable in eWAT from lean mice. Expressed in acid-sensing taste receptor cells (PKD2L1-positive cells), but not in other types of taste cells (at protein level).

The protein resides in the cell membrane. The protein localises to the cell projection. Its subcellular location is the microvillus. It carries out the reaction H(+)(in) = H(+)(out). Activated by both acid and alkali, with proton influx in response to extracellular acid and proton efflux during alkali stimulation. Inhibited by Zn(2+); this inhibition is thought to be pH-sensitive. Currents evoked in response to mild acid (pH 6.0) stimulus may also be mildly potentiated by exposure to Zn(2+). Activated by NH(4)Cl. Functionally, proton-selective ion channel. Biphasically modulated by acid and alkali, mediating proton influx and efflux in response to extracellular acid and base stimulation, respectively. Sour taste receptor, which carries inward currents in response to extracellular acidification. Sensor for ammonium chloride (NH(4)Cl) in taste receptor cells. NH(4)Cl acts by increasing the intracellular pH, thereby generating a driving force for proton entry through OTOP1 channel. Might also participate in alkaline sensation. Plays a role in the regulation of Ca(2+) flux in response to purigenic (ATP, ADP and UDP) stimuli, leading to increase in cytosolic Ca(2+) due to influx of extracellular calcium. May play this role by inhibiting P2Y purinoceptor-mediated Ca(2+) release in a Ca(2+)-dependent manner and promote an influx of Ca(2+) in response to ATP. Through this mechanism and possibly others, plays a role in the formation and function of calcium carbonate-based structures in the vestibular system of the inner ear, called otoconia, that sense gravity and linear acceleration. In obesity, may attenuate adipose tissue inflammation, through the negative regulation of IFNG signaling, hence may play an adaptive role in the maintainance of metabolic homeostasis. Following alkali activation, may also be permeable Na(+), K(+), Cs(+) and Li(+). This chain is Proton channel OTOP1, found in Mus musculus (Mouse).